The chain runs to 101 residues: Acylphosphatase (101 aa).

In terms of domain architecture, Acylphosphatase-like spans S11–P99. Residues R26 and N44 contribute to the active site.

The protein belongs to the acylphosphatase family.

The catalysed reaction is an acyl phosphate + H2O = a carboxylate + phosphate + H(+). The chain is Acylphosphatase (acyP) from Polaromonas naphthalenivorans (strain CJ2).